We begin with the raw amino-acid sequence, 438 residues long: tRNA(Ile)-lysidine synthase (438 aa).

Residue 26 to 31 (SGGADS) coordinates ATP.

The protein belongs to the tRNA(Ile)-lysidine synthase family.

The protein localises to the cytoplasm. It catalyses the reaction cytidine(34) in tRNA(Ile2) + L-lysine + ATP = lysidine(34) in tRNA(Ile2) + AMP + diphosphate + H(+). Its function is as follows. Ligates lysine onto the cytidine present at position 34 of the AUA codon-specific tRNA(Ile) that contains the anticodon CAU, in an ATP-dependent manner. Cytidine is converted to lysidine, thus changing the amino acid specificity of the tRNA from methionine to isoleucine. This chain is tRNA(Ile)-lysidine synthase, found in Parabacteroides distasonis (strain ATCC 8503 / DSM 20701 / CIP 104284 / JCM 5825 / NCTC 11152).